The sequence spans 414 residues: Imidazolonepropionase (414 aa).

Fe(3+)-binding residues include His-73 and His-75. 2 residues coordinate Zn(2+): His-73 and His-75. 4-imidazolone-5-propanoate-binding residues include Arg-82, Tyr-145, and His-178. An N-formimidoyl-L-glutamate-binding site is contributed by Tyr-145. A Fe(3+)-binding site is contributed by His-249. His-249 lines the Zn(2+) pocket. Position 252 (Gln-252) interacts with 4-imidazolone-5-propanoate. Asp-324 lines the Fe(3+) pocket. Position 324 (Asp-324) interacts with Zn(2+). 2 residues coordinate N-formimidoyl-L-glutamate: Asn-326 and Gly-328. Ser-329 contacts 4-imidazolone-5-propanoate.

This sequence belongs to the metallo-dependent hydrolases superfamily. HutI family. The cofactor is Zn(2+). Requires Fe(3+) as cofactor.

It is found in the cytoplasm. It catalyses the reaction 4-imidazolone-5-propanoate + H2O = N-formimidoyl-L-glutamate. It functions in the pathway amino-acid degradation; L-histidine degradation into L-glutamate; N-formimidoyl-L-glutamate from L-histidine: step 3/3. Functionally, catalyzes the hydrolytic cleavage of the carbon-nitrogen bond in imidazolone-5-propanoate to yield N-formimidoyl-L-glutamate. It is the third step in the universal histidine degradation pathway. The chain is Imidazolonepropionase from Shewanella denitrificans (strain OS217 / ATCC BAA-1090 / DSM 15013).